The primary structure comprises 118 residues: MRLLFLVLLVLLGLIQYPLWLGKGGWFKVWDLQRQVAEQRETNDGLRARNTALEAEVRDLATGVGAVEERARSELGMMREGEVFVHILPPGTPLPSDNSTPQASALSKPRPPATPPRR.

Over 1–3 (MRL) the chain is Cytoplasmic. Residues 4 to 21 (LFLVLLVLLGLIQYPLWL) form a helical membrane-spanning segment. Residues 22 to 118 (GKGGWFKVWD…PRPPATPPRR (97 aa)) lie on the Periplasmic side of the membrane. Residues 28–62 (KVWDLQRQVAEQRETNDGLRARNTALEAEVRDLAT) are a coiled coil. A disordered region spans residues 88-118 (LPPGTPLPSDNSTPQASALSKPRPPATPPRR). Polar residues predominate over residues 95–105 (PSDNSTPQASA). Residues 109-118 (PRPPATPPRR) are compositionally biased toward pro residues.

It belongs to the FtsB family. Part of a complex composed of FtsB, FtsL and FtsQ.

The protein localises to the cell inner membrane. Functionally, essential cell division protein. May link together the upstream cell division proteins, which are predominantly cytoplasmic, with the downstream cell division proteins, which are predominantly periplasmic. The protein is Cell division protein FtsB of Bordetella bronchiseptica (strain ATCC BAA-588 / NCTC 13252 / RB50) (Alcaligenes bronchisepticus).